A 253-amino-acid polypeptide reads, in one-letter code: 5'-nucleotidase SurE (253 aa).

A divalent metal cation-binding residues include D8, D9, S39, and N97.

It belongs to the SurE nucleotidase family. A divalent metal cation is required as a cofactor.

The protein localises to the cytoplasm. The enzyme catalyses a ribonucleoside 5'-phosphate + H2O = a ribonucleoside + phosphate. Nucleotidase that shows phosphatase activity on nucleoside 5'-monophosphates. This is 5'-nucleotidase SurE from Aeromonas hydrophila subsp. hydrophila (strain ATCC 7966 / DSM 30187 / BCRC 13018 / CCUG 14551 / JCM 1027 / KCTC 2358 / NCIMB 9240 / NCTC 8049).